The following is a 278-amino-acid chain: Potassium/proton antiporter CemA (278 aa).

4 helical membrane passes run isoleucine 61–glycine 81, alanine 155–threonine 175, isoleucine 203–isoleucine 223, and phenylalanine 238–isoleucine 258.

The protein belongs to the CemA family.

The protein resides in the plastid. The protein localises to the chloroplast inner membrane. The catalysed reaction is K(+)(in) + H(+)(out) = K(+)(out) + H(+)(in). Functionally, contributes to K(+)/H(+) antiport activity by supporting proton efflux to control proton extrusion and homeostasis in chloroplasts in a light-dependent manner to modulate photosynthesis. Prevents excessive induction of non-photochemical quenching (NPQ) under continuous-light conditions. Indirectly promotes efficient inorganic carbon uptake into chloroplasts. In Pyropia yezoensis (Susabi-nori), this protein is Potassium/proton antiporter CemA.